Reading from the N-terminus, the 370-residue chain is Cobalt-precorrin-5B C(1)-methyltransferase (370 aa).

The protein belongs to the CbiD family.

The enzyme catalyses Co-precorrin-5B + S-adenosyl-L-methionine = Co-precorrin-6A + S-adenosyl-L-homocysteine. The protein operates within cofactor biosynthesis; adenosylcobalamin biosynthesis; cob(II)yrinate a,c-diamide from sirohydrochlorin (anaerobic route): step 6/10. Its function is as follows. Catalyzes the methylation of C-1 in cobalt-precorrin-5B to form cobalt-precorrin-6A. In Trichormus variabilis (strain ATCC 29413 / PCC 7937) (Anabaena variabilis), this protein is Cobalt-precorrin-5B C(1)-methyltransferase.